A 433-amino-acid chain; its full sequence is Glutamyl-tRNA reductase (433 aa).

Residues 49–52 (TCNR), serine 114, 119–121 (EPQ), and glutamine 125 contribute to the substrate site. Cysteine 50 functions as the Nucleophile in the catalytic mechanism. Position 201–206 (201–206 (GAGETI)) interacts with NADP(+).

It belongs to the glutamyl-tRNA reductase family. Homodimer.

It catalyses the reaction (S)-4-amino-5-oxopentanoate + tRNA(Glu) + NADP(+) = L-glutamyl-tRNA(Glu) + NADPH + H(+). It participates in porphyrin-containing compound metabolism; protoporphyrin-IX biosynthesis; 5-aminolevulinate from L-glutamyl-tRNA(Glu): step 1/2. Functionally, catalyzes the NADPH-dependent reduction of glutamyl-tRNA(Glu) to glutamate 1-semialdehyde (GSA). This is Glutamyl-tRNA reductase from Histophilus somni (strain 129Pt) (Haemophilus somnus).